Reading from the N-terminus, the 428-residue chain is L-lysine N6-monooxygenase MbtG (428 aa).

Positions 1-20 (MSTLAILGAGAKAVAVAAKA) are cleaved as a signal peptide.

Belongs to the lysine N(6)-hydroxylase/L-ornithine N(5)-oxygenase family. The cofactor is FAD.

It carries out the reaction L-lysine + NADPH + O2 = N(6)-hydroxy-L-lysine + NADP(+) + H2O. Its pathway is siderophore biosynthesis; mycobactin biosynthesis. Flavoprotein monooxygenase required for N-hydroxylation of the two acylated lysine residues during mycobactin assembly, thus producing the hydroxamate groups necessary for iron sequestration. Is also able, but less efficiently, to hydroxylate L-lysine (non acylated) in vitro. The sequence is that of L-lysine N6-monooxygenase MbtG (mbtG) from Mycolicibacterium paratuberculosis (strain ATCC BAA-968 / K-10) (Mycobacterium paratuberculosis).